Here is a 396-residue protein sequence, read N- to C-terminus: MGKEKFSRSKPHVNVGTIGHVDHGKTTLTAAITSVLAAKFGGTAKAYDQIDAAPEEKARGITINTAHVEYETANRHYAHVDCPGHADYVKNMITGAAQMDGAILVVSAADGPMPQTREHILLARQVGVPYIIVFLNKCDMVDDAELLELVEMEVRELLDKYEFPGDTTPIIHGSAKLAMEGDKGPMGEQAIMKLADALDSYIPLPERAIDGAFLMPVEDVFSISGRGTVVTGRVERGIIKVGEEIEIVGIHDTQKTTCTGVEMFRKLLDQGQAGDNVGILLRGTKREDVQRGQVLCKPGSIKPHTHFTGEIYVLSKDEGGRHTPFFNNYRPQFYFRTTDVTGAIELPEGKEMVMPGDNVSIIVKLINPIAMEEGLRFAIREGGKTVGAGVVAKVIA.

Residues 10–206 (KPHVNVGTIG…ALDSYIPLPE (197 aa)) enclose the tr-type G domain. The G1 stretch occupies residues 19–26 (GHVDHGKT). 19–26 (GHVDHGKT) contacts GTP. Position 26 (T26) interacts with Mg(2+). The tract at residues 60-64 (GITIN) is G2. The G3 stretch occupies residues 81–84 (DCPG). Residues 81 to 85 (DCPGH) and 136 to 139 (NKCD) contribute to the GTP site. The interval 136–139 (NKCD) is G4. Positions 174–176 (SAK) are G5.

It belongs to the TRAFAC class translation factor GTPase superfamily. Classic translation factor GTPase family. EF-Tu/EF-1A subfamily. As to quaternary structure, monomer.

Its subcellular location is the cytoplasm. The catalysed reaction is GTP + H2O = GDP + phosphate + H(+). Functionally, GTP hydrolase that promotes the GTP-dependent binding of aminoacyl-tRNA to the A-site of ribosomes during protein biosynthesis. The sequence is that of Elongation factor Tu 2 from Albidiferax ferrireducens (strain ATCC BAA-621 / DSM 15236 / T118) (Rhodoferax ferrireducens).